Here is a 121-residue protein sequence, read N- to C-terminus: Small ribosomal subunit protein uS13 (121 aa).

The tract at residues 89–121 is disordered; it reads MRHRRGLPVRGQHTKNNARTRKGKAVSIAGKKK.

This sequence belongs to the universal ribosomal protein uS13 family. As to quaternary structure, part of the 30S ribosomal subunit. Forms a loose heterodimer with protein S19. Forms two bridges to the 50S subunit in the 70S ribosome.

Located at the top of the head of the 30S subunit, it contacts several helices of the 16S rRNA. In the 70S ribosome it contacts the 23S rRNA (bridge B1a) and protein L5 of the 50S subunit (bridge B1b), connecting the 2 subunits; these bridges are implicated in subunit movement. Contacts the tRNAs in the A and P-sites. The chain is Small ribosomal subunit protein uS13 from Levilactobacillus brevis (strain ATCC 367 / BCRC 12310 / CIP 105137 / JCM 1170 / LMG 11437 / NCIMB 947 / NCTC 947) (Lactobacillus brevis).